A 335-amino-acid polypeptide reads, in one-letter code: Fructose-1,6-bisphosphatase class 1 (335 aa).

The Mg(2+) site is built by glutamate 92, aspartate 114, leucine 116, and aspartate 117. Substrate is bound by residues 117–120 (DGSS), asparagine 210, tyrosine 242, and lysine 274. Glutamate 280 serves as a coordination point for Mg(2+).

This sequence belongs to the FBPase class 1 family. Homotetramer. Mg(2+) serves as cofactor.

It localises to the cytoplasm. It catalyses the reaction beta-D-fructose 1,6-bisphosphate + H2O = beta-D-fructose 6-phosphate + phosphate. It participates in carbohydrate biosynthesis; gluconeogenesis. The polypeptide is Fructose-1,6-bisphosphatase class 1 (Lawsonia intracellularis (strain PHE/MN1-00)).